We begin with the raw amino-acid sequence, 92 residues long: Small ribosomal subunit protein uS19 (92 aa).

This sequence belongs to the universal ribosomal protein uS19 family.

Its function is as follows. Protein S19 forms a complex with S13 that binds strongly to the 16S ribosomal RNA. The polypeptide is Small ribosomal subunit protein uS19 (Bradyrhizobium sp. (strain BTAi1 / ATCC BAA-1182)).